The following is a 433-amino-acid chain: Oxaloacetate decarboxylase beta chain 2 (433 aa).

Transmembrane regions (helical) follow at residues 13–35 (LMHL…WLAI), 42–64 (LLLL…LALT), 125–147 (LFYK…VGAM), 160–182 (LLLG…TLNY), 214–236 (LAPE…VPLI), 266–288 (ILFP…PLLG), 308–327 (TVQN…SVGA), 339–361 (TLGI…VLMA), and 413–432 (VAGV…YVLA).

It belongs to the GcdB/MmdB/OadB family. In terms of assembly, heterotrimer of an alpha, a beta and a gamma subunit. It depends on Na(+) as a cofactor.

Its subcellular location is the cell membrane. It catalyses the reaction oxaloacetate + 2 Na(+)(in) + H(+) = pyruvate + 2 Na(+)(out) + CO2. Catalyzes the decarboxylation of oxaloacetate coupled to Na(+) translocation. The protein is Oxaloacetate decarboxylase beta chain 2 (oadB2) of Salmonella typhimurium (strain LT2 / SGSC1412 / ATCC 700720).